Here is a 57-residue protein sequence, read N- to C-terminus: Large ribosomal subunit protein bL32 (57 aa).

Belongs to the bacterial ribosomal protein bL32 family.

The polypeptide is Large ribosomal subunit protein bL32 (Streptomyces griseus subsp. griseus (strain JCM 4626 / CBS 651.72 / NBRC 13350 / KCC S-0626 / ISP 5235)).